The sequence spans 259 residues: Deoxyribose-phosphate aldolase (259 aa).

Asp102 (proton donor/acceptor) is an active-site residue. Residue Lys167 is the Schiff-base intermediate with acetaldehyde of the active site. The active-site Proton donor/acceptor is Lys201.

This sequence belongs to the DeoC/FbaB aldolase family. DeoC type 2 subfamily.

It localises to the cytoplasm. The enzyme catalyses 2-deoxy-D-ribose 5-phosphate = D-glyceraldehyde 3-phosphate + acetaldehyde. Its pathway is carbohydrate degradation; 2-deoxy-D-ribose 1-phosphate degradation; D-glyceraldehyde 3-phosphate and acetaldehyde from 2-deoxy-alpha-D-ribose 1-phosphate: step 2/2. In terms of biological role, catalyzes a reversible aldol reaction between acetaldehyde and D-glyceraldehyde 3-phosphate to generate 2-deoxy-D-ribose 5-phosphate. The polypeptide is Deoxyribose-phosphate aldolase (Escherichia coli O45:K1 (strain S88 / ExPEC)).